Reading from the N-terminus, the 132-residue chain is Large ribosomal subunit protein uL14 (132 aa).

The protein belongs to the universal ribosomal protein uL14 family. Part of the 50S ribosomal subunit. Forms a cluster with proteins L3 and L24e, part of which may contact the 16S rRNA in 2 intersubunit bridges.

Its function is as follows. Binds to 23S rRNA. Forms part of two intersubunit bridges in the 70S ribosome. This Halobacterium salinarum (strain ATCC 29341 / DSM 671 / R1) protein is Large ribosomal subunit protein uL14.